Here is a 337-residue protein sequence, read N- to C-terminus: MKTTIYDVAKAAGVSITTVSRVINNTGRISDKTRQKVMNVMNEMAYTPNVHAAALTGKRTNMIALVAPDISNPFYGELAKSIEERADELGFQMLICSTDYDPKKETKYFSVLKQKKVDGIIFATGIESHDSMSALEEIASEQIPIAMISQDKPLLPMDIVVIDDVRGGYEAAKHLLSLGHTNIACIIGDGSTTGEKNRIKGFRQAMEEAGVPIDESLIIQTRFSLESGKEEAGKLLDRNAPTAIFAFNDVLACAAIQAARIRGIKVPDDLSIIGFDNTILAEMAAPPLTTVAQPIKEMGAERHRTAGRSNRGKRKAKQKIVLPPELVVRHSTSPLNT.

The HTH lacI-type domain maps to 1–57 (MKTTIYDVAKAAGVSITTVSRVINNTGRISDKTRQKVMNVMNEMAYTPNVHAAALTG). Residues 5 to 24 (IYDVAKAAGVSITTVSRVIN) constitute a DNA-binding region (H-T-H motif). The interval 300–319 (AERHRTAGRSNRGKRKAKQK) is disordered.

In terms of biological role, involved in the control of degradation of B.subtilis amidophosphoribosyltransferase (purF). Probably activates the gene for a degradative protease. The sequence is that of HTH-type transcriptional regulator DegA (degA) from Bacillus subtilis (strain 168).